The following is a 146-amino-acid chain: Large ribosomal subunit protein uL15 (146 aa).

The segment covering 1–18 (MKLHELKPSEGSRKERNR) has biased composition (basic and acidic residues). Residues 1 to 50 (MKLHELKPSEGSRKERNRVGRGTGSGNGKTSGRGHKGQKARSGGGVRLGF) form a disordered region. Residues 21 to 31 (RGTGSGNGKTS) are compositionally biased toward gly residues.

The protein belongs to the universal ribosomal protein uL15 family. Part of the 50S ribosomal subunit.

Binds to the 23S rRNA. This is Large ribosomal subunit protein uL15 from Listeria monocytogenes serotype 4b (strain CLIP80459).